Consider the following 364-residue polypeptide: Molybdenum import ATP-binding protein ModC (364 aa).

An ABC transporter domain is found at 1 to 229 (MLLIDIKKQL…PLMRPWLNAS (229 aa)). 31–38 (GRSGAGKS) serves as a coordination point for ATP. The region spanning 293–360 (HSSIRNILPV…IKGVSVTQSD (68 aa)) is the Mop domain.

This sequence belongs to the ABC transporter superfamily. Molybdate importer (TC 3.A.1.8) family. The complex is composed of two ATP-binding proteins (ModC), two transmembrane proteins (ModB) and a solute-binding protein (ModA).

Its subcellular location is the cell inner membrane. The catalysed reaction is molybdate(out) + ATP + H2O = molybdate(in) + ADP + phosphate + H(+). In terms of biological role, part of the ABC transporter complex ModABC involved in molybdenum import. Responsible for energy coupling to the transport system. The protein is Molybdenum import ATP-binding protein ModC of Aliivibrio fischeri (strain ATCC 700601 / ES114) (Vibrio fischeri).